The primary structure comprises 263 residues: Tropinone reductase homolog At2g29300 (263 aa).

13–37 contributes to the NADP(+) binding site; the sequence is LVTGAASGIGYAIVEELAGFGARIH. Position 146 (Ser146) interacts with substrate. Tyr160 acts as the Proton acceptor in catalysis.

Belongs to the short-chain dehydrogenases/reductases (SDR) family. SDR65C subfamily.

This is Tropinone reductase homolog At2g29300 from Arabidopsis thaliana (Mouse-ear cress).